Here is a 486-residue protein sequence, read N- to C-terminus: MAEFETIIGLEVHAQLNTESKIFSTSATKFGSPPNSQTNPVCLGLPGALPVLNESALEKAIMAGIAFGCDISLFTKFDRKNYFYPDLPKGYQISQFDKPICTGGGVTFTIKGEESSRYVRLTRIHMEEDAGKLIHSADPNIPQSYVDLNRAGTPLIEIVSEPDMRSSDEAYYYLNSLKSILKYIRVSDCNMEEGSLRCDANVSIRPKGSDKFGTRVEIKNLNSFKAVKAAIDYEVEWQTEMALEGKTFQQQTKLWDSVANKTVTMRTKEMSHDYRYFPDPDLPVIILQKETVESVRSKLPELPNERKNRFVEKLGLPKYDAEVLTAEREIADYFEDALKVSGDAKKTSNWVKDEVLGVVNKESITISEFSVSAQRIGGLVKLIADGKISGKIAKTVFEELLISDKDAETIVTEKNLIVVRDDKEIERIVNEAIANNQDAVAKYKSGKDRALGAIVGYVMKVSKGKADPELVNQMLLDKLGSLPPKE.

It belongs to the GatB/GatE family. GatB subfamily. In terms of assembly, heterotrimer of A, B and C subunits.

The enzyme catalyses L-glutamyl-tRNA(Gln) + L-glutamine + ATP + H2O = L-glutaminyl-tRNA(Gln) + L-glutamate + ADP + phosphate + H(+). The catalysed reaction is L-aspartyl-tRNA(Asn) + L-glutamine + ATP + H2O = L-asparaginyl-tRNA(Asn) + L-glutamate + ADP + phosphate + 2 H(+). Functionally, allows the formation of correctly charged Asn-tRNA(Asn) or Gln-tRNA(Gln) through the transamidation of misacylated Asp-tRNA(Asn) or Glu-tRNA(Gln) in organisms which lack either or both of asparaginyl-tRNA or glutaminyl-tRNA synthetases. The reaction takes place in the presence of glutamine and ATP through an activated phospho-Asp-tRNA(Asn) or phospho-Glu-tRNA(Gln). This is Aspartyl/glutamyl-tRNA(Asn/Gln) amidotransferase subunit B from Leptospira borgpetersenii serovar Hardjo-bovis (strain L550).